A 95-amino-acid chain; its full sequence is Beta-defensin 132 (95 aa).

The signal sequence occupies residues 1 to 22 (MKFLLLVLAALRFLTQVIPASA). Disulfide bonds link Cys27–Cys55, Cys35–Cys49, and Cys39–Cys56. The disordered stretch occupies residues 72–95 (GNHWQSRRRNTQRKDKKQQTTVTS). The span at 76–87 (QSRRRNTQRKDK) shows a compositional bias: basic residues.

It belongs to the beta-defensin family.

Its subcellular location is the secreted. Its function is as follows. Has antibacterial activity. The chain is Beta-defensin 132 (DEFB132) from Pongo pygmaeus (Bornean orangutan).